The following is a 288-amino-acid chain: Ice-binding protein (288 aa).

A signal peptide spans 1 to 22 (MFSTTLINTFSLGLLAVVSVVA). 2 short sequence motifs (ice-binding site motif (T-A/G-X-T/N)) span residues 75–78 (TAGN) and 154–157 (TAFN). Asn194 carries N-linked (GlcNAc...) asparagine glycosylation. 2 consecutive short sequence motifs (ice-binding site motif (T-A/G-X-T/N)) follow at residues 196-199 (TGVT) and 265-268 (TGAT).

It belongs to the ice-binding protein family.

Its subcellular location is the secreted. Its function is as follows. Binds ice crystals and most probably inhibits their growth in order to prevent cell damage from extracellular ice. The protein is Ice-binding protein of Lentinula edodes (Shiitake mushroom).